Consider the following 877-residue polypeptide: (E,E)-geranyllinalool synthase (877 aa).

Residues aspartate 540 and aspartate 544 each coordinate Mg(2+). Substrate is bound by residues aspartate 540, aspartate 544, arginine 677, and asparagine 680. Residues 540–544 carry the DDXXD motif motif; sequence DDFFD. Mg(2+) is bound by residues asparagine 680, serine 684, and glutamate 688.

The protein belongs to the terpene synthase family. Tpsf subfamily. The cofactor is Mg(2+). Mn(2+) serves as cofactor. As to expression, expressed in leaves and flowers.

It is found in the cytoplasm. The catalysed reaction is (2E,6E,10E)-geranylgeranyl diphosphate + H2O = (6E,10E)-geranyllinalool + diphosphate. The protein operates within secondary metabolite biosynthesis; terpenoid biosynthesis. Involved in the biosynthesis of homoterpenes, attractants of herbivores parasitoids and predators (e.g. predatory mites and parasitoid wasps). Involved in diterpene (C20) biosynthesis. Catalyzes the conversion of geranylgeranyl diphosphate to (E,E)-geranyllinalool, the precursor of the insect-induced volatile C16-homoterpene TMTT. The polypeptide is (E,E)-geranyllinalool synthase (Arabidopsis thaliana (Mouse-ear cress)).